Consider the following 166-residue polypeptide: Large ribosomal subunit protein uL11 (166 aa).

The protein belongs to the universal ribosomal protein uL11 family. As to quaternary structure, part of the ribosomal stalk of the 50S ribosomal subunit. Interacts with L10 and the large rRNA to form the base of the stalk. L10 forms an elongated spine to which L12 dimers bind in a sequential fashion forming a multimeric L10(L12)X complex.

In terms of biological role, forms part of the ribosomal stalk which helps the ribosome interact with GTP-bound translation factors. The chain is Large ribosomal subunit protein uL11 from Methanopyrus kandleri (strain AV19 / DSM 6324 / JCM 9639 / NBRC 100938).